We begin with the raw amino-acid sequence, 582 residues long: Poly(A) RNA polymerase, mitochondrial (582 aa).

The N-terminal 37 residues, 1-37 (MAVPGVGLLTRLNLCARRRTRVQRPIVRLLSCPGTVA), are a transit peptide targeting the mitochondrion. Lys90 carries the post-translational modification N6-acetyllysine. Residues 107–109 (YES) and 241–242 (GC) contribute to the ATP site. Residues Asp243 and Asp245 each contribute to the Mg(2+) site. Positions 437–483 (LELLLKEFFEYFGNFAFDKNSINIRQGREQNKPDSSPLYIQNPFETS) constitute a PAP-associated domain.

Belongs to the DNA polymerase type-B-like family. Homodimer. It depends on Mg(2+) as a cofactor. Mn(2+) is required as a cofactor. Ubiquitous, with stronger expression in tissues with high energy requirements: heart, brain, and skeletal muscle.

The protein localises to the cytoplasm. Its subcellular location is the mitochondrion. The catalysed reaction is RNA(n) + ATP = RNA(n)-3'-adenine ribonucleotide + diphosphate. In terms of biological role, polymerase that creates the 3' poly(A) tail of mitochondrial transcripts. Can use all four nucleotides, but has higher activity with ATP and UTP (in vitro). Plays a role in replication-dependent histone mRNA degradation. May be involved in the terminal uridylation of mature histone mRNAs before their degradation is initiated. Might be responsible for the creation of some UAA stop codons which are not encoded in mtDNA. The polypeptide is Poly(A) RNA polymerase, mitochondrial (MTPAP) (Homo sapiens (Human)).